Here is a 783-residue protein sequence, read N- to C-terminus: MSHEFSPENTAVLFEAMKQEQHNRRRRVPMERRRRVVLACFNCKARKVRCDGANPCKACASNNLECTYPVKDEKEMDYSKDYFIDLSKRYKCLEYIVERLCSTKVSTYTTPSLIEVCNRISNQKSLLSSDVFSLNSESTNSQRDVDTLTQGALVCSQIQQDPTVVAEDTNNGINADASDQSVDEIMKLIGKIKVDSNGESRYIGASAGEAFVDSVQSELLVDPSFSELSAYSHTHHSYPPNEHDVNAVQKALSLLPPPEVSDFLIKSFYGHVQANFFFFHETLLRYRLNLIMSFQNPSVDPGFLCLLMMIFALGSMFAHMEIRSASNPFDNPGKQFFDTARLLLPQVIQQCKPSLVQASILMGLYLQSTLSQKSSYTYFGLSLSAAVANGLHRSCENPNIDPKTKELRNRLWWSVYTMDRLISIATGRPLSIADSECDAALPTVVPELEIEGSASNVHNIISMSKIAKIMGKTMEQLYGTVNYKKNPINIIESLRADLEEWKRSLPPFQILENLDAEDPLFRANVHLHMTYDQAIIIMSRPVLLHKMKNAKNSPRVDRINEDCILAARHLISLVHLLQNHSQLSCYSFFDYNYTFSSALVVLLHCVTEPCEEDDIAMQYAYSALDYMAEGNEAAKNCARVIRLFDAHLKGARSDGNGNTSQSGFMAWQRWIAEVSAKDEPEKLMSPYNKSIGGGRNSNSLTPNANLGADVSFFPTDDTSFLLDHSKLDDDLEKFASTLDPIKTTPDLANDSSLLNWANTDQGMDIEGSWLGNMHPTWLDYVCP.

A DNA-binding region (zn(2)-C6 fungal-type) is located at residues 40 to 66 (CFNCKARKVRCDGANPCKACASNNLEC).

It localises to the cytoplasm. It is found in the nucleus. This is an uncharacterized protein from Schizosaccharomyces pombe (strain 972 / ATCC 24843) (Fission yeast).